A 1475-amino-acid chain; its full sequence is MFKRRALGFLLAFLLVFTAVFGSMPMEFAKAETDTAPAIANVVGNFQSKLGDSDWNINSDKTIMTYKGNGFYEFTTPVALPAGDYEYKVALNHSWEGGGVPSQGNLSFHLDSDSVVTFYYNYNTSSITDSTKYTPIPEDKLPRLVGTIQPAIGAGDDWKPETSTAIMRDYKFNNVYEYTANVPKGNYEFKVTLGPSWDINYGLNGEQNGPNIPLNVAYDTKITFYYDSVSHNIWTDYNPPLTGPDNNIYYDDLRHDTHDPFFRSPFGAIKTGDTVTLRIQAKNHDIESAKISYWDDIKKTRIEVPMYRIGQSPDGKYEYWEVKLSFDHPTRIWYYFILKDGTKTAYYGDNDEQLGGVGKATDTENKDFELTVYDKNLDTPDWMKGSVMYQIFPDRFFNGDSSNDHLKKYSRGFDPVEYHSNWYELPDNPNDKNKLGYTGDGIWSNDFFGGDLKGIDDKLDYLKSLGISVIYLNPIFQSPSNHRYDTTDYTKIDELLGDLSTFKKLMEDAHAKGIKVILDGVFNHTSDDSIYFDRYGKYLNTGVLGAYQAWKQGDQSKSPYGDWYEIKPDGTYEGWWGFDSLPVIRQINGSEYNVKSWADFIINNPNAISKYWLNPDGDKNVGADGWRLDVANEVAHDFWVHFRGAINTVKPNAPMVAENWNDASLDLLGDSFNSVMNYLFRNAVIDFILDKSFDDGNVVHNPIDAAKLDQRLMSIYERYPLPVFYSTMNLLGSHDTMRILTVFGYNSADENQNSQAAKDLAVKRLKLAAILQMGYPGMPSIYYGDEAGQSGGKDPDNRRTFPWGREDTDLQTFFKKVVNIRNENQVLKTGDLETLYANGDVYAFGRRIINGKDTFGKSYPDSVAIVVINKGDAKQVSIDTTKFIRDGVAFTDALSGKTYTVQDGKIVVEVGSMDGAILISDTGQNLTAPQPITDLKAVSGNGKVDLSWSVVDKAVSYNIYRSTVKGGLYEKIASNVTQITYTDTEVTNGLKYVYAVTAVDNDGNESALSNEVEAYPAFPIGWAGNMNQVNTHVIGVNNPVEVYAEVWAQGLTDKPGQGENMIAQLGYRYIGDTVGDAVYNAVYNKVEGVEISKDWTWVDAQYVGDSGNNDKYMAKFVPDMVGTWEYIMRFSSNQGHDWTYTKGPDGKTDEAKQFTVVPSNDVETPTAPVLQQPGIESSRVTLNWSPSADDVAIFGYEIYKSSSETGPFIKIATVSDSVYNYVDTDVVNGNVYYYKVVAVDTSYNRTASNTVKATPDIIPIKVTFNVTIPDYTPDDGVNIAGNFPDAFWNPNANQMTKAGSNTYSITLTLNEGTQIEYKYARGSWDKVEKGEYGNEIDNRKITVVNQGSNTMVVNDTVQRWRDVPIYIYSPKDKTIVDANTSEIEIKGNTYKGAKVTINDESFVQQENGVFTKVVPLEYGVNTIKIHVEPSGDKNNELTKDITITVTREKPARRQNLLLLHQQKQQNHLKKYHKAK.

The signal sequence occupies residues 1–31 (MFKRRALGFLLAFLLVFTAVFGSMPMEFAKA). Ca(2+)-binding residues include aspartate 245, asparagine 247, aspartate 285, aspartate 340, asparagine 398, aspartate 400, asparagine 403, aspartate 404, glycine 449, and aspartate 451. Residues histidine 524 and arginine 627 each coordinate substrate. Catalysis depends on aspartate 629, which acts as the Nucleophile. The active-site Proton donor is the glutamate 658. Residues 734-735 (HD), aspartate 794, and arginine 798 each bind substrate. Fibronectin type-III domains are found at residues 928 to 1019 (APQP…PAFP) and 1164 to 1257 (TPTA…TPDI). The 108-residue stretch at 1255–1362 (PDIIPIKVTF…VNDTVQRWRD (108 aa)) folds into the CBM20 domain.

Belongs to the glycosyl hydrolase 13 family. Requires Ca(2+) as cofactor.

It carries out the reaction Endohydrolysis of (1-&gt;4)-alpha-D-glucosidic linkages in polysaccharides containing three or more (1-&gt;4)-alpha-linked D-glucose units.. The enzyme catalyses Hydrolysis of (1-&gt;6)-alpha-D-glucosidic linkages in pullulan, amylopectin and glycogen, and in the alpha- and beta-limit dextrins of amylopectin and glycogen.. The sequence is that of Amylopullulanase (apu) from Thermoanaerobacter thermohydrosulfuricus (Clostridium thermohydrosulfuricum).